We begin with the raw amino-acid sequence, 457 residues long: MSAAGTGKKVFIKTFGCQMNEYDSDKMADVLRAAEGYEPTTDVEQADLILFNTCSVREKAQEKVFSDLGRVKHLKARGVKIGVGGCVASQEGAALIERAPYVDVVFGPQTLHRLPEMLARRDAQQRPQVDISFPEIEKFDHLPPARVDGATAFVSIMEGCSKYCSYCVVPYTRGEEVSRPFDDVLTEVASLADQGVKEVTLLGQNVNGYRGRMGDTAEIADFALLLEYVAEIPGIARIRYTTSHPNEFSQRLIDVYARVPQLVNHLHLPVQHGSDRILSAMKRGYTSLEYKSSIRKLRAIRPDISLSTDFIVGFPGETDDDHARTMKLIEDVGFDHSFSFIYSARPGTPAAALHDDAPRELKLARLQQVQEAIEANGRRIGQSRVGTVQRILVEGPSRRPELNAGHELMGRTECNRIVNFAGPARLTGQLIDVTITEAYPHSLRGEVLLRERSPQPA.

An MTTase N-terminal domain is found at K8–A123. Positions 17, 54, 86, 160, 164, and 167 each coordinate [4Fe-4S] cluster. The region spanning R146–R379 is the Radical SAM core domain. The TRAM domain maps to Q382–L449.

It belongs to the methylthiotransferase family. MiaB subfamily. Monomer. [4Fe-4S] cluster is required as a cofactor.

It localises to the cytoplasm. The enzyme catalyses N(6)-dimethylallyladenosine(37) in tRNA + (sulfur carrier)-SH + AH2 + 2 S-adenosyl-L-methionine = 2-methylsulfanyl-N(6)-dimethylallyladenosine(37) in tRNA + (sulfur carrier)-H + 5'-deoxyadenosine + L-methionine + A + S-adenosyl-L-homocysteine + 2 H(+). Its function is as follows. Catalyzes the methylthiolation of N6-(dimethylallyl)adenosine (i(6)A), leading to the formation of 2-methylthio-N6-(dimethylallyl)adenosine (ms(2)i(6)A) at position 37 in tRNAs that read codons beginning with uridine. In Methylibium petroleiphilum (strain ATCC BAA-1232 / LMG 22953 / PM1), this protein is tRNA-2-methylthio-N(6)-dimethylallyladenosine synthase.